Reading from the N-terminus, the 383-residue chain is L-lactate dehydrogenase (383 aa).

One can recognise an FMN hydroxy acid dehydrogenase domain in the interval methionine 1–proline 380. A substrate-binding site is contributed by tyrosine 24. FMN is bound by residues serine 106 and glutamine 127. Tyrosine 129 contacts substrate. Threonine 155 provides a ligand contact to FMN. Residue arginine 164 participates in substrate binding. Lysine 251 is an FMN binding site. Histidine 275 serves as the catalytic Proton acceptor. Residue arginine 278 coordinates substrate. Aspartate 306–arginine 330 serves as a coordination point for FMN.

Belongs to the FMN-dependent alpha-hydroxy acid dehydrogenase family. It depends on FMN as a cofactor.

Its subcellular location is the cell inner membrane. It catalyses the reaction (S)-lactate + A = pyruvate + AH2. Catalyzes the conversion of L-lactate to pyruvate. Is coupled to the respiratory chain. The polypeptide is L-lactate dehydrogenase (Caulobacter vibrioides (strain ATCC 19089 / CIP 103742 / CB 15) (Caulobacter crescentus)).